Reading from the N-terminus, the 332-residue chain is Phosphate acyltransferase (332 aa).

This sequence belongs to the PlsX family. In terms of assembly, homodimer. Probably interacts with PlsY.

Its subcellular location is the cytoplasm. It catalyses the reaction a fatty acyl-[ACP] + phosphate = an acyl phosphate + holo-[ACP]. Its pathway is lipid metabolism; phospholipid metabolism. Catalyzes the reversible formation of acyl-phosphate (acyl-PO(4)) from acyl-[acyl-carrier-protein] (acyl-ACP). This enzyme utilizes acyl-ACP as fatty acyl donor, but not acyl-CoA. The polypeptide is Phosphate acyltransferase (Bacillus pumilus (strain SAFR-032)).